We begin with the raw amino-acid sequence, 446 residues long: Exodeoxyribonuclease 7 large subunit (446 aa).

It belongs to the XseA family. As to quaternary structure, heterooligomer composed of large and small subunits.

It is found in the cytoplasm. The enzyme catalyses Exonucleolytic cleavage in either 5'- to 3'- or 3'- to 5'-direction to yield nucleoside 5'-phosphates.. Its function is as follows. Bidirectionally degrades single-stranded DNA into large acid-insoluble oligonucleotides, which are then degraded further into small acid-soluble oligonucleotides. The polypeptide is Exodeoxyribonuclease 7 large subunit (Geotalea uraniireducens (strain Rf4) (Geobacter uraniireducens)).